Here is a 456-residue protein sequence, read N- to C-terminus: GTPase Der (456 aa).

2 EngA-type G domains span residues 4–169 (PVVA…PSKD) and 178–353 (VQLA…DQSR). GTP-binding positions include 10 to 17 (GRPNVGKS), 57 to 61 (DTGGL), 120 to 123 (NKCE), 184 to 191 (GRPNVGKS), 231 to 235 (DTAGI), and 296 to 299 (NKWD). Residues 354–439 (RRVTTSVVNE…PIKLFWRGKQ (86 aa)) enclose the KH-like domain.

Belongs to the TRAFAC class TrmE-Era-EngA-EngB-Septin-like GTPase superfamily. EngA (Der) GTPase family. Associates with the 50S ribosomal subunit.

In terms of biological role, GTPase that plays an essential role in the late steps of ribosome biogenesis. This Prochlorococcus marinus (strain NATL1A) protein is GTPase Der.